The sequence spans 953 residues: TPR repeat-containing protein ZIP4 (953 aa).

A TPR 1 repeat occupies Ala-129 to Ala-162. Positions Ala-248–Pro-269 are disordered. TPR repeat units follow at residues His-432–Asp-465 and Ala-473–Ile-506. The interval Arg-924–Val-953 is disordered. Residues Ile-943 to Val-953 show a composition bias toward polar residues.

The protein resides in the nucleus. It is found in the chromosome. In terms of biological role, required for crossover formation, complete synapsis of homologous chromosomes and bivalent formation during meiosis. Is specific to recombination events resulting in interference-sensitive crossovers (class I meiotic crossover) and works cooperatively with MER3 to promote crossovers. The protein is TPR repeat-containing protein ZIP4 of Oryza sativa subsp. indica (Rice).